Reading from the N-terminus, the 29-residue chain is Amelogenin-like protein (29 aa).

S16 carries the post-translational modification Phosphoserine.

It belongs to the amelogenin family.

The protein localises to the secreted. Its subcellular location is the extracellular space. It is found in the extracellular matrix. Functionally, tooth enamel proteins are produced in ameloblasts and play a role in biomineralization. The polypeptide is Amelogenin-like protein (AMEL) (Oryctolagus cuniculus (Rabbit)).